Reading from the N-terminus, the 1414-residue chain is Phenyloxazoline synthase MbtB (1414 aa).

The 74-residue stretch at 5–78 folds into the Carrier 1 domain; it reads TACSEIIRAE…AWSQLVSAGT (74 aa). O-(pantetheine 4'-phosphoryl)serine is present on serine 39. The condensation/cyclization stretch occupies residues 96–394; that stretch reads EGEPFPVAPM…SSLLLDVDLT (299 aa). Residues 579-975 form an adenylation region; the sequence is SYAQLRDQAS…RLPGVHAAAA (397 aa). In terms of domain architecture, Carrier 2 spans 1057–1135; sequence APRTVLQRAL…ALAQLLTGRE (79 aa). At serine 1094 the chain carries O-(pantetheine 4'-phosphoryl)serine. Residues 1188–1413 are thioesterase; the sequence is GAVLVFPHAG…AVARMVSADV (226 aa).

It belongs to the ATP-dependent AMP-binding enzyme family. MbtB subfamily. It depends on pantetheine 4'-phosphate as a cofactor. Post-translationally, 4'-phosphopantetheine is transferred from CoA to a specific serine in each of the two carrier protein domains, leading to their activation from apo to holo forms.

It functions in the pathway siderophore biosynthesis; mycobactin biosynthesis. Its function is as follows. Involved in the initial steps of the mycobactin biosynthetic pathway. Putatively couples activated salicylic acid with serine or threonine and cyclizes this precursor to the hydroxyphenyloxazoline ring system present in this class of siderophores. Essential for growth in macrophages. The protein is Phenyloxazoline synthase MbtB (mbtB) of Mycobacterium tuberculosis (strain CDC 1551 / Oshkosh).